A 422-amino-acid chain; its full sequence is Serine protease inhibitor A3A (422 aa).

Positions 1 to 17 (MAFIAALGLLMVGICPA) are cleaved as a signal peptide. N218, N230, and N271 each carry an N-linked (GlcNAc...) asparagine glycan. Positions 369–394 (HTEADVITIARYNFQSAKIKAKIVKV) are RCL.

This sequence belongs to the serpin family.

The protein resides in the secreted. This is Serine protease inhibitor A3A (Serpina3a) from Mus musculus (Mouse).